Here is a 142-residue protein sequence, read N- to C-terminus: Small heat shock protein IbpB (142 aa).

A sHSP domain is found at 26–137 (AGESQSFPPY…APQRIAISER (112 aa)).

This sequence belongs to the small heat shock protein (HSP20) family. In terms of assembly, homodimer. Forms homomultimers of about 100-150 subunits at optimal growth temperatures. Conformation changes to oligomers at high temperatures or high ionic concentrations. The decrease in size of the multimers is accompanied by an increase in chaperone activity.

It localises to the cytoplasm. Associates with aggregated proteins, together with IbpA, to stabilize and protect them from irreversible denaturation and extensive proteolysis during heat shock and oxidative stress. Aggregated proteins bound to the IbpAB complex are more efficiently refolded and reactivated by the ATP-dependent chaperone systems ClpB and DnaK/DnaJ/GrpE. Its activity is ATP-independent. The polypeptide is Small heat shock protein IbpB (Klebsiella pneumoniae (strain 342)).